Here is an 82-residue protein sequence, read N- to C-terminus: Large ribosomal subunit protein bL31B (82 aa).

The protein belongs to the bacterial ribosomal protein bL31 family. Type B subfamily. In terms of assembly, part of the 50S ribosomal subunit.

The polypeptide is Large ribosomal subunit protein bL31B (Proteus mirabilis (strain HI4320)).